Reading from the N-terminus, the 390-residue chain is Argininosuccinate synthase (390 aa).

An ATP-binding site is contributed by 6–14 (SYSGGLDTT). Tyr-83 serves as a coordination point for L-citrulline. Gly-113 lines the ATP pocket. L-aspartate is bound by residues Thr-115, Asn-119, and Asp-120. Residue Asn-119 coordinates L-citrulline. Residues Arg-123, Ser-169, Ser-178, Glu-254, and Tyr-266 each contribute to the L-citrulline site.

Belongs to the argininosuccinate synthase family. Type 1 subfamily. In terms of assembly, homotetramer.

It localises to the cytoplasm. The catalysed reaction is L-citrulline + L-aspartate + ATP = 2-(N(omega)-L-arginino)succinate + AMP + diphosphate + H(+). Its pathway is amino-acid biosynthesis; L-arginine biosynthesis; L-arginine from L-ornithine and carbamoyl phosphate: step 2/3. The polypeptide is Argininosuccinate synthase (Archaeoglobus fulgidus (strain ATCC 49558 / DSM 4304 / JCM 9628 / NBRC 100126 / VC-16)).